A 444-amino-acid chain; its full sequence is DNA repair protein RadA (444 aa).

The segment at 10–27 adopts a C4-type zinc-finger fold; that stretch reads CQECGYKSVKWLGKCPSC. 91 to 98 is an ATP binding site; it reads GEPGIGKS. A RadA KNRFG motif motif is present at residues 247 to 251; the sequence is KNRFG. Residues 345–444 form a lon-protease-like region; that stretch reads DVFVNVAGGM…HIQEAIEVLF (100 aa).

The protein belongs to the RecA family. RadA subfamily.

Its function is as follows. DNA-dependent ATPase involved in processing of recombination intermediates, plays a role in repairing DNA breaks. Stimulates the branch migration of RecA-mediated strand transfer reactions, allowing the 3' invading strand to extend heteroduplex DNA faster. Binds ssDNA in the presence of ADP but not other nucleotides, has ATPase activity that is stimulated by ssDNA and various branched DNA structures, but inhibited by SSB. Does not have RecA's homology-searching function. The sequence is that of DNA repair protein RadA from Aquifex aeolicus (strain VF5).